Consider the following 728-residue polypeptide: FYN-binding protein 2 (728 aa).

Disordered regions lie at residues 17 to 76 (QNLD…PLQP), 250 to 287 (QAPE…RPPI), and 367 to 390 (PGKN…EKQP). Over residues 42 to 75 (GTQSTQILANGKPLSSNHKQRTPYCSSSESQPLQ) the composition is skewed to polar residues. Pro residues predominate over residues 276 to 285 (GPPPPKPSRP). The span at 377-390 (SAKHEDKKMKEKQP) shows a compositional bias: basic and acidic residues. The residue at position 491 (Tyr-491) is a Phosphotyrosine. Positions 521 to 524 (YEDV) match the SH2-binding; to LCP2 motif. At Tyr-587 the chain carries Phosphotyrosine. The SH3 domain occupies 664–724 (IVINTAVACS…LIEHLDFKHQ (61 aa)).

As to quaternary structure, interacts with SKAP1, LCK and FYN. The phosphorylated form interacts with LCP2. Post-translationally, phosphorylation is required for its function in T-cell activation. As to expression, expressed in T-cells (at protein level). Widely expressed.

Its subcellular location is the membrane raft. Functionally, adapter protein that plays a role in T-cell receptor (TCR)-mediated activation of signaling pathways. Required for T-cell activation and integrin-mediated T-cell adhesion in response to TCR stimulation. This Homo sapiens (Human) protein is FYN-binding protein 2.